Here is a 1358-residue protein sequence, read N- to C-terminus: DNA-directed RNA polymerase subunit beta (1358 aa).

It belongs to the RNA polymerase beta chain family. As to quaternary structure, the RNAP catalytic core consists of 2 alpha, 1 beta, 1 beta' and 1 omega subunit. When a sigma factor is associated with the core the holoenzyme is formed, which can initiate transcription.

It carries out the reaction RNA(n) + a ribonucleoside 5'-triphosphate = RNA(n+1) + diphosphate. In terms of biological role, DNA-dependent RNA polymerase catalyzes the transcription of DNA into RNA using the four ribonucleoside triphosphates as substrates. This chain is DNA-directed RNA polymerase subunit beta, found in Chromohalobacter salexigens (strain ATCC BAA-138 / DSM 3043 / CIP 106854 / NCIMB 13768 / 1H11).